The following is a 222-amino-acid chain: Protein-L-isoaspartate O-methyltransferase (222 aa).

S68 is an active-site residue.

Belongs to the methyltransferase superfamily. L-isoaspartyl/D-aspartyl protein methyltransferase family.

The protein localises to the cytoplasm. It catalyses the reaction [protein]-L-isoaspartate + S-adenosyl-L-methionine = [protein]-L-isoaspartate alpha-methyl ester + S-adenosyl-L-homocysteine. Its function is as follows. Catalyzes the methyl esterification of L-isoaspartyl residues in peptides and proteins that result from spontaneous decomposition of normal L-aspartyl and L-asparaginyl residues. It plays a role in the repair and/or degradation of damaged proteins. The sequence is that of Protein-L-isoaspartate O-methyltransferase from Koribacter versatilis (strain Ellin345).